The primary structure comprises 342 residues: MNTNDFDFYLPEELIAQTPLEKRDASKLLVIDHKNKTMTDSHFDHILDELKPGDALVMNNTRVLPARLYGEKPDTHGHIELLLLKNTEGDQWEVLAKPAKRLRVGTKVSFGDGRLIATVTKELEHGGRIVEFSYDGIFLEVLESLGEMPLPPYIHEKLEDRDRYQTVYAKENGSAAAPTAGLHFTKELLEKIETKGVKLVYLTLHVGLGTFRPVSVDNLDEHEMHSEFYQLSKEAADTLNAVKESGGRIVAVGTTSIRTLETIGSKFNGELKADSGWTNIFIKPGYQFKVVDAFSTNFHLPKSTLVMLVSAFAGRDFVLEAYNHAVEERYRFFSFGDAMFVK.

This sequence belongs to the QueA family. Monomer.

The protein localises to the cytoplasm. It carries out the reaction 7-aminomethyl-7-carbaguanosine(34) in tRNA + S-adenosyl-L-methionine = epoxyqueuosine(34) in tRNA + adenine + L-methionine + 2 H(+). It functions in the pathway tRNA modification; tRNA-queuosine biosynthesis. Transfers and isomerizes the ribose moiety from AdoMet to the 7-aminomethyl group of 7-deazaguanine (preQ1-tRNA) to give epoxyqueuosine (oQ-tRNA). The protein is S-adenosylmethionine:tRNA ribosyltransferase-isomerase of Streptococcus agalactiae serotype III (strain NEM316).